We begin with the raw amino-acid sequence, 911 residues long: Golgin IMH1 (911 aa).

Disordered regions lie at residues 16–41 and 271–314; these read LAKG…SGLP and KELP…ETVD. Residues 101–280 adopt a coiled-coil conformation; the sequence is FFQDLNNKNN…KELPKAISHQ (180 aa). Basic residues predominate over residues 286–299; that stretch reads NRRKKNRNKGKKNK. Residues S308 and S660 each carry the phosphoserine modification. 2 coiled-coil regions span residues 312–735 and 766–814; these read TVDN…ALKH and SKAD…KERQ. The interval 814–850 is disordered; the sequence is QYSDKSGRVSRSGSIGTLANANIDSSPANNSNPTKLE. Residues 822–847 are compositionally biased toward polar residues; it reads VSRSGSIGTLANANIDSSPANNSNPT. S827 is modified (phosphoserine). At T830 the chain carries Phosphothreonine. The region spanning 861-909 is the GRIP domain; it reads DSEKNEKIAYIKNVLLGFLEHKEQRNQLLPVISMLLQLDSTDEKRLVMS.

As to quaternary structure, forms oligomers and is present in high-molecular-mass complexes. Interacts with ARL1.

It is found in the cytoplasm. Its subcellular location is the golgi apparatus membrane. Functionally, involved in vesicular transport between an endosomal compartment and the Golgi apparatus. The polypeptide is Golgin IMH1 (IMH1) (Saccharomyces cerevisiae (strain ATCC 204508 / S288c) (Baker's yeast)).